The following is a 335-amino-acid chain: Dihydroorotate dehydrogenase (quinone) (335 aa).

FMN is bound by residues 61–65 and Thr-85; that span reads AGLDK. Lys-65 lines the substrate pocket. 110-114 lines the substrate pocket; it reads NRMGF. The FMN site is built by Asn-138 and Asn-171. Asn-171 lines the substrate pocket. Ser-174 acts as the Nucleophile in catalysis. Asn-176 provides a ligand contact to substrate. Residues Lys-216 and Thr-244 each contribute to the FMN site. A substrate-binding site is contributed by 245–246; sequence NT. FMN is bound by residues Gly-267, Gly-296, and 317–318; that span reads YS.

It belongs to the dihydroorotate dehydrogenase family. Type 2 subfamily. Monomer. FMN is required as a cofactor.

The protein resides in the cell membrane. It catalyses the reaction (S)-dihydroorotate + a quinone = orotate + a quinol. It functions in the pathway pyrimidine metabolism; UMP biosynthesis via de novo pathway; orotate from (S)-dihydroorotate (quinone route): step 1/1. Its function is as follows. Catalyzes the conversion of dihydroorotate to orotate with quinone as electron acceptor. The polypeptide is Dihydroorotate dehydrogenase (quinone) (Pseudoalteromonas atlantica (strain T6c / ATCC BAA-1087)).